The following is a 732-amino-acid chain: Putative pectinesterase/pectinesterase inhibitor 28 (732 aa).

The helical transmembrane segment at 17–37 threads the bilayer; the sequence is VIISISSVLLISMVVAVTIGV. Asn-40, Asn-93, Asn-278, and Asn-297 each carry an N-linked (GlcNAc...) asparagine glycan. Positions 51 to 204 are pectinesterase inhibitor 28; the sequence is TTSVKAIKDV…VQLTHNGLAM (154 aa). Residues 252 to 548 form a pectinesterase 28 region; that stretch reads DIVVAQDGSG…FTPAQYIQGD (297 aa). Positions 327 and 357 each coordinate substrate. Asp-380 functions as the Proton donor; for pectinesterase activity in the catalytic mechanism. An intrachain disulfide couples Cys-394 to Cys-414. Residue Asp-401 is the Nucleophile; for pectinesterase activity of the active site. An N-linked (GlcNAc...) asparagine glycan is attached at Asn-413. Substrate is bound by residues Arg-469 and Trp-471. 3 N-linked (GlcNAc...) asparagine glycosylation sites follow: Asn-566, Asn-570, and Asn-581. 2 stretches are compositionally biased toward low complexity: residues 570–620 and 633–732; these read NSTV…PSTS and PSMV…SSIG. The disordered stretch occupies residues 570–732; the sequence is NSTVTGSSLS…PSASPQSSIG (163 aa).

This sequence in the N-terminal section; belongs to the PMEI family. The protein in the C-terminal section; belongs to the pectinesterase family. In terms of tissue distribution, expressed in flower buds.

Its subcellular location is the membrane. The enzyme catalyses [(1-&gt;4)-alpha-D-galacturonosyl methyl ester](n) + n H2O = [(1-&gt;4)-alpha-D-galacturonosyl](n) + n methanol + n H(+). It functions in the pathway glycan metabolism; pectin degradation; 2-dehydro-3-deoxy-D-gluconate from pectin: step 1/5. Its function is as follows. Acts in the modification of cell walls via demethylesterification of cell wall pectin. The protein is Putative pectinesterase/pectinesterase inhibitor 28 (PME28) of Arabidopsis thaliana (Mouse-ear cress).